We begin with the raw amino-acid sequence, 294 residues long: Phosphatidylglycerol--prolipoprotein diacylglyceryl transferase (294 aa).

7 helical membrane passes run 19 to 39, 69 to 89, 101 to 121, 139 to 159, 195 to 215, 224 to 244, and 267 to 287; these read VFGFDLALRWYALAYIVGIVL, LLTWVIVGVILGGRLGYVFFY, ILAVWQGGMAFHGGLLGVIAA, IMALGVPPGLLLGRIANFINA, QLYEAGLEGLILGALLIWLVW, GYVAGVFFAGYGVSRFFVEFF, and WGLTMGQCLSLPMILLGIWLI. Position 152 (Arg-152) interacts with a 1,2-diacyl-sn-glycero-3-phospho-(1'-sn-glycerol).

Belongs to the Lgt family.

It is found in the cell inner membrane. It catalyses the reaction L-cysteinyl-[prolipoprotein] + a 1,2-diacyl-sn-glycero-3-phospho-(1'-sn-glycerol) = an S-1,2-diacyl-sn-glyceryl-L-cysteinyl-[prolipoprotein] + sn-glycerol 1-phosphate + H(+). Its pathway is protein modification; lipoprotein biosynthesis (diacylglyceryl transfer). Catalyzes the transfer of the diacylglyceryl group from phosphatidylglycerol to the sulfhydryl group of the N-terminal cysteine of a prolipoprotein, the first step in the formation of mature lipoproteins. The chain is Phosphatidylglycerol--prolipoprotein diacylglyceryl transferase from Roseobacter denitrificans (strain ATCC 33942 / OCh 114) (Erythrobacter sp. (strain OCh 114)).